Here is a 409-residue protein sequence, read N- to C-terminus: Inactive serine protease 35 (409 aa).

An N-terminal signal peptide occupies residues 1–20; sequence MENTLLWLVILIPGWALSDG. An N-linked (GlcNAc...) asparagine glycan is attached at Asn-90. A Peptidase S1 domain is found at 124-404; it reads VYGTDSRFSI…ICLWIHGNAA (281 aa). Cysteines 154 and 170 form a disulfide. Over residues 188 to 207 the composition is skewed to basic residues; sequence VLKMRNKGGRKKRRGSKRSR. Residues 188-247 are disordered; that stretch reads VLKMRNKGGRKKRRGSKRSRREAESAGQSQAHLRESTTQRPGKKSRRGPRVTQGRPSFQW.

Belongs to the peptidase S1 family. In terms of tissue distribution, in ovary, it localizes to the theca cells of pre-antral follicles, the theca and granulosa cells of pre-ovulatory and ovulatory follicles, as well as to the developing corpus luteum.

The protein localises to the secreted. This is Inactive serine protease 35 (Prss35) from Mus musculus (Mouse).